A 488-amino-acid polypeptide reads, in one-letter code: Mannosylglycerate hydrolase MGH2 (488 aa).

Residues Tyr-94, 98–101 (WNWD), Tyr-146, Gln-167, and Gly-227 contribute to the substrate site. Asp-229 functions as the Proton donor in the catalytic mechanism. Substrate is bound by residues Arg-262 and 415 to 416 (YW). Residue Glu-459 is the Proton acceptor of the active site.

The protein belongs to the glycosyl hydrolase 63 family.

The enzyme catalyses (2R)-2-O-(alpha-D-mannosyl)-glycerate + H2O = D-mannose + (R)-glycerate. It carries out the reaction (2R)-2-O-(alpha-D-glucopyranosyl)-glycerate + H2O = (R)-glycerate + D-glucose. Its activity is regulated as follows. Activity is not dependent on divalent cations, but it is enhanced by Mn(2+). In terms of biological role, catalyzes the hydrolysis of alpha-D-mannosyl-glycerate (MG) to D-glycerate and D-mannose. Can also hydrolyze alpha-D-glucopyranosyl-glycerate (GG)with lower efficiency. The polypeptide is Mannosylglycerate hydrolase MGH2 (Selaginella moellendorffii (Spikemoss)).